Here is a 100-residue protein sequence, read N- to C-terminus: Transcription elongation factor A protein-like 7 (100 aa).

Residues Met-1–Gln-32 show a composition bias toward basic and acidic residues. The tract at residues Met-1–Glu-34 is disordered. Residues Glu-60–Ser-88 are a coiled coil.

This sequence belongs to the TFS-II family. TFA subfamily. As to expression, highly expressed in normal and fetal brain tissues, and weakly expressed in uterus and ovary. Down-regulated in epithelial ovarian, cervical, prostate, breast, brain and lung cancer cell lines and in brain and ovarian tumors.

Its subcellular location is the nucleus. Its function is as follows. Plays a role in the negative regulation of NF-kappa-B signaling at the basal level by modulating transcriptional activity of NF-kappa-B on its target gene promoters. Associates with cyclin D1 promoter containing Myc E-box sequence and transcriptionally represses cyclin D1 expression. Regulates telomerase reverse transcriptase expression and telomerase activity in both ALT (alternative lengthening of telomeres)and telomerase-positive cell lines. This chain is Transcription elongation factor A protein-like 7 (TCEAL7), found in Homo sapiens (Human).